Reading from the N-terminus, the 77-residue chain is uncharacterized protein (77 aa).

Residues 36-52 traverse the membrane as a helical segment; sequence FYQLILKVLSALLLLSV.

Its subcellular location is the membrane. This is an uncharacterized protein from Saccharomyces cerevisiae (strain ATCC 204508 / S288c) (Baker's yeast).